The sequence spans 132 residues: Small ribosomal subunit protein uS8 (132 aa).

This sequence belongs to the universal ribosomal protein uS8 family. Part of the 30S ribosomal subunit. Contacts proteins S5 and S12.

One of the primary rRNA binding proteins, it binds directly to 16S rRNA central domain where it helps coordinate assembly of the platform of the 30S subunit. The protein is Small ribosomal subunit protein uS8 of Mesorhizobium japonicum (strain LMG 29417 / CECT 9101 / MAFF 303099) (Mesorhizobium loti (strain MAFF 303099)).